The sequence spans 208 residues: NADH-ubiquinone oxidoreductase chain 4 (208 aa).

Helical transmembrane passes span 23–43 (VWINVTSYSFVINMIALVTLW), 60–80 (SLSSPLTMLTIWLLPLMLLAS), 93–113 (KMYISLLITLQVLLIMTFSAN), 114–134 (ELIMFYILFEATLIPTLIIIT), 147–167 (LYFLFYTLIGSIPLLIALISI), and 188–208 (PTWSSHILWLACIMAFMIKMP).

The protein belongs to the complex I subunit 4 family. Core subunit of respiratory chain NADH dehydrogenase (Complex I) which is composed of 45 different subunits.

Its subcellular location is the mitochondrion inner membrane. It carries out the reaction a ubiquinone + NADH + 5 H(+)(in) = a ubiquinol + NAD(+) + 4 H(+)(out). Functionally, core subunit of the mitochondrial membrane respiratory chain NADH dehydrogenase (Complex I) which catalyzes electron transfer from NADH through the respiratory chain, using ubiquinone as an electron acceptor. Essential for the catalytic activity and assembly of complex I. This chain is NADH-ubiquinone oxidoreductase chain 4 (MT-ND4), found in Phodopus sungorus (Striped hairy-footed hamster).